A 490-amino-acid chain; its full sequence is Glutamate--tRNA ligase (490 aa).

A 'HIGH' region motif is present at residues 10 to 20 (PSPTGSLHIGG). The 'KMSKS' region motif lies at 251–255 (KLSKR). Residue Lys-254 coordinates ATP.

It belongs to the class-I aminoacyl-tRNA synthetase family. Glutamate--tRNA ligase type 1 subfamily. As to quaternary structure, monomer.

Its subcellular location is the cytoplasm. It carries out the reaction tRNA(Glu) + L-glutamate + ATP = L-glutamyl-tRNA(Glu) + AMP + diphosphate. Catalyzes the attachment of glutamate to tRNA(Glu) in a two-step reaction: glutamate is first activated by ATP to form Glu-AMP and then transferred to the acceptor end of tRNA(Glu). The chain is Glutamate--tRNA ligase from Moorella thermoacetica (strain ATCC 39073 / JCM 9320).